The sequence spans 77 residues: Translation initiation factor IF-1, chloroplastic (77 aa).

Positions 1-71 (MKEQKLIHEG…TRGRIIYRLR (71 aa)) constitute an S1-like domain.

Belongs to the IF-1 family. Component of the 30S ribosomal translation pre-initiation complex which assembles on the 30S ribosome in the order IF-2 and IF-3, IF-1 and N-formylmethionyl-tRNA(fMet); mRNA recruitment can occur at any time during PIC assembly.

It localises to the plastid. The protein localises to the chloroplast. One of the essential components for the initiation of protein synthesis. Stabilizes the binding of IF-2 and IF-3 on the 30S subunit to which N-formylmethionyl-tRNA(fMet) subsequently binds. Helps modulate mRNA selection, yielding the 30S pre-initiation complex (PIC). Upon addition of the 50S ribosomal subunit IF-1, IF-2 and IF-3 are released leaving the mature 70S translation initiation complex. The chain is Translation initiation factor IF-1, chloroplastic from Acorus calamus var. americanus (American sweet flag).